The chain runs to 447 residues: Sporulation protein YpeB (447 aa).

Belongs to the YpeB family.

In terms of biological role, required for spore cortex hydrolysis during germination. Appears to be required for either expression, localization, activation or function of SleB. This Halalkalibacterium halodurans (strain ATCC BAA-125 / DSM 18197 / FERM 7344 / JCM 9153 / C-125) (Bacillus halodurans) protein is Sporulation protein YpeB.